The sequence spans 152 residues: MIALIQRVKRADVQVGERTTGEIGAGLLALVCAERGDTEAAADKLLAKLLGYRVFSDAAGKMNLPVSNIDGAGRAGGLLLVSQFTLAADTNSGLRPSFTPAAPPEEGKRLFDYFVAAARERHPIVETGEFGADMQVSLVNDGPVTFWLQVRP.

The Gly-cisPro motif, important for rejection of L-amino acids signature appears at 142 to 143; the sequence is GP.

It belongs to the DTD family. Homodimer.

The protein localises to the cytoplasm. It catalyses the reaction glycyl-tRNA(Ala) + H2O = tRNA(Ala) + glycine + H(+). The enzyme catalyses a D-aminoacyl-tRNA + H2O = a tRNA + a D-alpha-amino acid + H(+). In terms of biological role, an aminoacyl-tRNA editing enzyme that deacylates mischarged D-aminoacyl-tRNAs. Also deacylates mischarged glycyl-tRNA(Ala), protecting cells against glycine mischarging by AlaRS. Acts via tRNA-based rather than protein-based catalysis; rejects L-amino acids rather than detecting D-amino acids in the active site. By recycling D-aminoacyl-tRNA to D-amino acids and free tRNA molecules, this enzyme counteracts the toxicity associated with the formation of D-aminoacyl-tRNA entities in vivo and helps enforce protein L-homochirality. The chain is D-aminoacyl-tRNA deacylase from Burkholderia vietnamiensis (strain G4 / LMG 22486) (Burkholderia cepacia (strain R1808)).